We begin with the raw amino-acid sequence, 139 residues long: Protein cornichon homolog 4 (139 aa).

The next 3 helical transmembrane spans lie at 5–25 (VFLF…YFII), 57–77 (IVTV…NLPV), and 118–138 (LGFY…ALIN).

It belongs to the cornichon family. Interacts with Sec23/24 complex components SEC24B and SEC24D. Interacts with CCR5. Interacts with ADRB2 in the early secretory pathway.

Its subcellular location is the membrane. It localises to the endoplasmic reticulum. The protein localises to the endoplasmic reticulum-Golgi intermediate compartment. Involved in G protein-coupled receptors (GPCRs) trafficking from the endoplasmic reticulum to the cell surface; it promotes the exit of GPCRs from the early secretory pathway, likely through interaction with the COPII machinery. This is Protein cornichon homolog 4 (Cnih4) from Mus musculus (Mouse).